We begin with the raw amino-acid sequence, 490 residues long: Ribulose bisphosphate carboxylase large chain (490 aa).

Residues Asn127 and Thr177 each coordinate substrate. The Proton acceptor role is filled by Lys179. A substrate-binding site is contributed by Lys181. Mg(2+) is bound by residues Lys205, Asp207, and Glu208. Lys205 carries the N6-carboxylysine modification. His297 functions as the Proton acceptor in the catalytic mechanism. Arg298, His330, and Ser382 together coordinate substrate.

It belongs to the RuBisCO large chain family. Type I subfamily. In terms of assembly, heterohexadecamer of 8 large chains and 8 small chains. The cofactor is Mg(2+).

Its subcellular location is the plastid. The protein resides in the chloroplast. The enzyme catalyses 2 (2R)-3-phosphoglycerate + 2 H(+) = D-ribulose 1,5-bisphosphate + CO2 + H2O. It catalyses the reaction D-ribulose 1,5-bisphosphate + O2 = 2-phosphoglycolate + (2R)-3-phosphoglycerate + 2 H(+). Functionally, ruBisCO catalyzes two reactions: the carboxylation of D-ribulose 1,5-bisphosphate, the primary event in carbon dioxide fixation, as well as the oxidative fragmentation of the pentose substrate in the photorespiration process. Both reactions occur simultaneously and in competition at the same active site. The protein is Ribulose bisphosphate carboxylase large chain of Detonula confervacea (Marine diatom).